A 130-amino-acid polypeptide reads, in one-letter code: Small ribosomal subunit protein uS9 (130 aa).

It belongs to the universal ribosomal protein uS9 family.

This is Small ribosomal subunit protein uS9 from Aliivibrio fischeri (strain MJ11) (Vibrio fischeri).